The sequence spans 110 residues: UPF0122 protein RBAM_015800 (110 aa).

It belongs to the UPF0122 family.

In terms of biological role, might take part in the signal recognition particle (SRP) pathway. This is inferred from the conservation of its genetic proximity to ftsY/ffh. May be a regulatory protein. The sequence is that of UPF0122 protein RBAM_015800 from Bacillus velezensis (strain DSM 23117 / BGSC 10A6 / LMG 26770 / FZB42) (Bacillus amyloliquefaciens subsp. plantarum).